The following is an 88-amino-acid chain: MIEKSIKAEIVKANARAANDTGSPEVQVALLTGRINELTPHFKANAKDHHGRRGLLRMVSRRRKLLDYLKSKDADRYTALIAKLGLRK.

The protein belongs to the universal ribosomal protein uS15 family. In terms of assembly, part of the 30S ribosomal subunit. Forms a bridge to the 50S subunit in the 70S ribosome, contacting the 23S rRNA.

Functionally, one of the primary rRNA binding proteins, it binds directly to 16S rRNA where it helps nucleate assembly of the platform of the 30S subunit by binding and bridging several RNA helices of the 16S rRNA. Forms an intersubunit bridge (bridge B4) with the 23S rRNA of the 50S subunit in the ribosome. The chain is Small ribosomal subunit protein uS15 from Polaromonas sp. (strain JS666 / ATCC BAA-500).